An 86-amino-acid chain; its full sequence is Alpha-mammal toxin Ts3 (86 aa).

Residues 1 to 19 form the signal peptide; sequence MNYFILLVVVCLLTAGTEG. In terms of domain architecture, LCN-type CS-alpha/beta spans 21–82; sequence KDGYPVEYDN…EPTKTNGKCK (62 aa). Cystine bridges form between C31-C81, C35-C57, C43-C64, and C47-C66. S83 carries the serine amide modification.

As to expression, expressed by the venom gland.

It is found in the secreted. Functionally, alpha toxins bind voltage-independently at site-3 of sodium channels (Nav) and inhibit the inactivation of the activated channels, thereby blocking neuronal transmission. This synthetic toxin inhibits inactivation of rat Nav1.4/SCN4A (when tested at 201 nM). In addition, it has been shown to cause a persistent sodium channel activation in nitrergic inhibitory fibers innervating the rabbit corpus cavernosum, resulting in NO release and cavernosal smooth muscle relaxation. This toxin is active against mammals. In terms of biological role, this synthetic peptide with a Ser at position 31 (C12S) acts as a bradykinin-potentiating peptide (BPP). Induces endothelium-dependent vasodilation that is reverted by NO synthase inhibitor, suggesting it activates molecular targets on vascular endothelium leading to NO production and vasodilation. It appears to induce vasodilation through muscarinic acetylcholine receptors (AChR) M2 (CHRM2) and M3 (CHRM3). Does not inhibit the angiotensin-converting enzyme (ACE). Does not act via bradykinin B2 receptor. In Tityus serrulatus (Brazilian scorpion), this protein is Alpha-mammal toxin Ts3.